Consider the following 293-residue polypeptide: Formamidopyrimidine-DNA glycosylase (293 aa).

Catalysis depends on P2, which acts as the Schiff-base intermediate with DNA. E3 acts as the Proton donor in catalysis. K58 serves as the catalytic Proton donor; for beta-elimination activity. DNA-binding residues include H104, R123, and K166. The FPG-type zinc finger occupies 257-293; that stretch reads QVYDREGEPCRTDGCEGVVKRFVQNGRSTFWCPKCQR. R283 acts as the Proton donor; for delta-elimination activity in catalysis.

This sequence belongs to the FPG family. In terms of assembly, monomer. Zn(2+) is required as a cofactor.

It carries out the reaction Hydrolysis of DNA containing ring-opened 7-methylguanine residues, releasing 2,6-diamino-4-hydroxy-5-(N-methyl)formamidopyrimidine.. The catalysed reaction is 2'-deoxyribonucleotide-(2'-deoxyribose 5'-phosphate)-2'-deoxyribonucleotide-DNA = a 3'-end 2'-deoxyribonucleotide-(2,3-dehydro-2,3-deoxyribose 5'-phosphate)-DNA + a 5'-end 5'-phospho-2'-deoxyribonucleoside-DNA + H(+). Functionally, involved in base excision repair of DNA damaged by oxidation or by mutagenic agents. Acts as a DNA glycosylase that recognizes and removes damaged bases. Has a preference for oxidized purines, such as 7,8-dihydro-8-oxoguanine (8-oxoG). Has AP (apurinic/apyrimidinic) lyase activity and introduces nicks in the DNA strand. Cleaves the DNA backbone by beta-delta elimination to generate a single-strand break at the site of the removed base with both 3'- and 5'-phosphates. The polypeptide is Formamidopyrimidine-DNA glycosylase (Bradyrhizobium sp. (strain ORS 278)).